Consider the following 315-residue polypeptide: Replication-associated protein VP4 (315 aa).

Residues Tyr-176 and Tyr-180 each act as O-(5'-phospho-DNA)-tyrosine intermediate in the active site. A coiled-coil region spans residues 253–315 (EYDAKVKLKS…FKQLQEKLKL (63 aa)).

This sequence belongs to the microviridae Rep protein family.

It carries out the reaction ATP + (deoxyribonucleotide)n-3'-hydroxyl + 5'-phospho-(deoxyribonucleotide)m = (deoxyribonucleotide)n+m + AMP + diphosphate.. Its function is as follows. Plays an essential role in viral DNA replication. Binds the origin of replication and cleaves the dsDNA replicative form I (RFI) and becomes covalently bound to it via phosphotyrosine bond, generating the dsDNA replicative form II (RFII). In turn, viral DNA replication initiates at the 3'-OH of the cleavage site. After one round of rolling circle synthesis, protein VP4 is linked to the newly synthesized ssDNA and joins the ends of the displaced strand to generate a circular single-stranded molecule ready to be packed into a virion. In Bdellovibrio bacteriovorus (Bacteriophage phiMH2K), this protein is Replication-associated protein VP4.